The chain runs to 402 residues: 8-amino-7-oxononanoate synthase (402 aa).

Arg-26 contributes to the substrate binding site. Pyridoxal 5'-phosphate is bound at residue 114–115; that stretch reads GY. Substrate is bound at residue His-139. Ser-182, His-210, and Thr-239 together coordinate pyridoxal 5'-phosphate. Lys-242 carries the post-translational modification N6-(pyridoxal phosphate)lysine. Thr-359 is a substrate binding site.

It belongs to the class-II pyridoxal-phosphate-dependent aminotransferase family. BioF subfamily. Homodimer. Pyridoxal 5'-phosphate serves as cofactor.

It catalyses the reaction 6-carboxyhexanoyl-[ACP] + L-alanine + H(+) = (8S)-8-amino-7-oxononanoate + holo-[ACP] + CO2. Its pathway is cofactor biosynthesis; biotin biosynthesis. Functionally, catalyzes the decarboxylative condensation of pimeloyl-[acyl-carrier protein] and L-alanine to produce 8-amino-7-oxononanoate (AON), [acyl-carrier protein], and carbon dioxide. This Halorhodospira halophila (strain DSM 244 / SL1) (Ectothiorhodospira halophila (strain DSM 244 / SL1)) protein is 8-amino-7-oxononanoate synthase.